The chain runs to 364 residues: 2-oxoglutarate-dependent dioxygenase imqE (364 aa).

Positions 73–92 (KQKAAHPPGPNPQRGWSGIG) are disordered. The 117-residue stretch at 199–315 (DGSELRLLHY…RWSAAYFFKA (117 aa)) folds into the Fe2OG dioxygenase domain. Positions 227, 229, and 287 each coordinate Fe cation. 2-oxoglutarate is bound at residue Arg-306.

Belongs to the iron/ascorbate-dependent oxidoreductase family. Requires Fe(2+) as cofactor.

The protein operates within secondary metabolite biosynthesis. 2-oxoglutarate-dependent dioxygenase; part of the gene cluster that mediates the biosynthesis of imizoquins A to D, tripeptide-derived alkaloids that serve a protective role against oxidative stress that are essential for normal germination. ImqB is a canonical three-module NRPS that assembles the tripeptide backbone of the imizoquins via condensation of Trp, Tyr, and Leu-derived precursors. N-methylation by imqF and phenol oxidation by imqC, followed by cyclization via the FAD-dependent oxidase imqH carry out the three-step transformation of L-tyrosine into tetrahydroisoquinoline. Importantly, this sequence requires the presence of a free amine in the tyrosine moiety, indicating that isoquinoline formation occurs prior to peptide bond formation. The imidazolidin-4-one ring of imizoquins could form following additional oxidation of the methyl-derived bridgehead carbon by imqH. Lastly, O-methylation by imqG and leucine hydroxylation by imqE complete biosynthesis of the imizoquins. The sequence is that of 2-oxoglutarate-dependent dioxygenase imqE from Aspergillus flavus (strain ATCC 200026 / FGSC A1120 / IAM 13836 / NRRL 3357 / JCM 12722 / SRRC 167).